A 521-amino-acid chain; its full sequence is Maturase K (521 aa).

The protein belongs to the intron maturase 2 family. MatK subfamily.

It is found in the plastid. It localises to the chloroplast. In terms of biological role, usually encoded in the trnK tRNA gene intron. Probably assists in splicing its own and other chloroplast group II introns. In Trillium erectum (Beth root), this protein is Maturase K.